The chain runs to 266 residues: Secreted RxLR effector protein 128 (266 aa).

Residues 1–18 form the signal peptide; it reads MRGAFYTAIALLIGRSQT. The RxLR-dEER motif lies at 48–63; that stretch reads RYLRDGLAHSATNEER.

It belongs to the RxLR effector family.

The protein resides in the secreted. Its subcellular location is the host nucleus. Secreted effector that dos not suppress the host cell death induced by cell death-inducing proteins. This Plasmopara viticola (Downy mildew of grapevine) protein is Secreted RxLR effector protein 128.